We begin with the raw amino-acid sequence, 819 residues long: Protein O-mannosyl-transferase tmem260 (819 aa).

A compositionally biased stretch (polar residues) spans 1–10 (MNNSPTLSNT). Residues 1–68 (MNNSPTLSNT…NNNNNIINVN (68 aa)) form a disordered region. Residues 15–68 (NNNNNSNSNSNSNNNNNNNNNNNNNSNNNNNNNNNVNRNVNNRNNNNNNIINVN) show a composition bias toward low complexity. N18, N38, and N70 each carry an N-linked (GlcNAc...) asparagine glycan. A run of 7 helical transmembrane segments spans residues 113-133 (IACIVLLFISCTIIYSMTQYP), 152-172 (VAHPPGYPLFTFLGYIFSHII), 185-205 (FMSSMIGSIASIFIYLTVYLW), 210-230 (WCGLLSAYMFTFSPLIWMYQI), 232-252 (GEVFSMNNMFVAMLMFLGVWY), 285-305 (LTNQHTLVLIVIPFAFWLMFI), and 316-336 (ILSNLVFYTLIGLSPYLLLFI). N349 is a glycosylation site (N-linked (GlcNAc...) asparagine). A run of 4 helical transmembrane segments spans residues 391–411 (LIIQFGYIGLALSLIGLLNLL), 427–447 (MIIFSFLFYITFFFNLCNLPI), 459–479 (FFMQPNVIISITMGLGIKSIF), and 505–525 (YLLPIIIILLVGNQIGFNYNL). N-linked (GlcNAc...) asparagine glycosylation is found at N531, N686, N693, and N783.

It belongs to the glycosyltransferase 117 (GT117) family.

It is found in the endoplasmic reticulum membrane. The enzyme catalyses a di-trans,poly-cis-dolichyl beta-D-mannosyl phosphate + L-seryl-[protein] = 3-O-(alpha-D-mannosyl)-L-seryl-[protein] + a di-trans,poly-cis-dolichyl phosphate + H(+). It carries out the reaction a di-trans,poly-cis-dolichyl beta-D-mannosyl phosphate + L-threonyl-[protein] = 3-O-(alpha-D-mannosyl)-L-threonyl-[protein] + a di-trans,poly-cis-dolichyl phosphate + H(+). Functionally, O-mannosyl-transferase that transfers mannosyl residues to the hydroxyl group of serine or threonine residues of proteins. The polypeptide is Protein O-mannosyl-transferase tmem260 (Dictyostelium discoideum (Social amoeba)).